The chain runs to 88 residues: Small ribosomal subunit protein uS15 (88 aa).

The protein belongs to the universal ribosomal protein uS15 family. Part of the 30S ribosomal subunit. Forms a bridge to the 50S subunit in the 70S ribosome, contacting the 23S rRNA.

Functionally, one of the primary rRNA binding proteins, it binds directly to 16S rRNA where it helps nucleate assembly of the platform of the 30S subunit by binding and bridging several RNA helices of the 16S rRNA. Its function is as follows. Forms an intersubunit bridge (bridge B4) with the 23S rRNA of the 50S subunit in the ribosome. The sequence is that of Small ribosomal subunit protein uS15 from Thermoanaerobacter pseudethanolicus (strain ATCC 33223 / 39E) (Clostridium thermohydrosulfuricum).